A 757-amino-acid polypeptide reads, in one-letter code: MNITQILSQELSATAAQITAAVELLDDGATVPFIARYRKEATGGLDDTQLRRLAERLQYLRELEERKAVVLKSIEEQGKLSDDLRAQIEAADNKTALEDLYLPYKPKRRTKAQIAREHGLQPLADVLLAEQSQDVEAAAQGYLNENVPDAKAALDGARAILMEQFAEDAELIGTLRDKLWNEAEIHAQVVGGKETEGEKFSDYFDHREPIRAMPSHRALAVLRGRNEGVLNIALKYQPDDTPITQQSEYEQIIARRFKVSDGHKWLRDTVRLTWRAKIFLSLELEALNRLKEAADTDAITVFARNLKDLLLAAPAGRLTTLGLDPGYRNGVKCAVVDDTGKLLDTVIVYLHQENNMLATLSRLIKQHGVKLIAIGNGTASRETDKIAGELVREMSKMGLHKIVVSEAGASIYSASELAAREFPDLDVSLRGAVSIARRLQDPLAELVKIDPKSIGVGQYQHDVNQSQLAKSLDAVVEDCVNAVGVDVNTASAPLLARISGLNQTLAQNIVAYRDENGAFDSRKKLLKVPRLGEKTFEQAAGFLRINGGKEPLDASAVHPEAYPVVAKMLAQQGISAAELIGNRERVKQIKASDFTDERFGLPTILDILSELEKPGRDPRGEFQTASFAEGIHEISDLQVGMILEGVVSNVANFGAFVDIGVHQDGLVHISALSNKFVQDPREVVKAGDVVKVKVLEVDAARKRIALTMRLDDEPGGAKHKMPSENRSRERTAGRKPQRNDRAPANSAMADAFAKLKR.

The region spanning 640–709 (GMILEGVVSN…ARKRIALTMR (70 aa)) is the S1 motif domain. Residues 710 to 741 (LDDEPGGAKHKMPSENRSRERTAGRKPQRNDR) are compositionally biased toward basic and acidic residues. The segment at 710-757 (LDDEPGGAKHKMPSENRSRERTAGRKPQRNDRAPANSAMADAFAKLKR) is disordered.

This is an uncharacterized protein from Neisseria meningitidis serogroup A / serotype 4A (strain DSM 15465 / Z2491).